The primary structure comprises 70 residues: Putative venom toxin Ts29 (70 aa).

Residues 1-20 (MSPLFVVLLIATTTFYHSDA) form the signal peptide.

As to expression, expressed by the venom gland.

The protein localises to the secreted. The chain is Putative venom toxin Ts29 from Tityus serrulatus (Brazilian scorpion).